The following is a 472-amino-acid chain: Ulvan lyase (472 aa).

The N-terminal stretch at 1–21 is a signal peptide; the sequence is MIIKQYLLKISLCVLLLGCDS. Asn-46 and Asn-109 together coordinate substrate. The active-site Proton donor is His-110. Substrate is bound by residues Lys-112 and His-130. The active-site Proton acceptor is Tyr-175. Residues Arg-191, His-195, and Tyr-233 each coordinate substrate. His-195 contributes to the Zn(2+) binding site. Zn(2+)-binding residues include His-251, Cys-253, and His-265. His-265 contacts substrate.

It belongs to the polysaccharide lyase 25 family.

Its function is as follows. Ulvan lyase involved in ulvan degradation. Ulvan is the main polysaccharide component of the Ulvales (green seaweed) cell wall. It is composed of disaccharide building blocks comprising 3-sulfated rhamnose (Rha3S) linked to D-glucuronic acid (GlcA), L-iduronic acid (IduA), or D-xylose (Xyl). Ulvan lyase catalyzes the endolytic cleavage of the glycosidic bond between Rha3S and the uronic acids GlcA or IduA, producing oligosaccharides that have unsaturated 4-deoxy-L-threo-hex-4-enopyranosiduronic acid (deltaUA) at the non-reducing end. This results eventually in the degradation of the ulvan polysaccharide into deltaUA-Rha3S disaccharides and deltaUA-Rha3S-Xyl-Rha3S tetrasaccharides. The sequence is that of Ulvan lyase from Nonlabens ulvanivorans (Persicivirga ulvanivorans).